The chain runs to 273 residues: 2,3,4,5-tetrahydropyridine-2,6-dicarboxylate N-succinyltransferase (273 aa).

The substrate site is built by R105 and D142.

It belongs to the transferase hexapeptide repeat family. As to quaternary structure, homotrimer.

The protein resides in the cytoplasm. It carries out the reaction (S)-2,3,4,5-tetrahydrodipicolinate + succinyl-CoA + H2O = (S)-2-succinylamino-6-oxoheptanedioate + CoA. Its pathway is amino-acid biosynthesis; L-lysine biosynthesis via DAP pathway; LL-2,6-diaminopimelate from (S)-tetrahydrodipicolinate (succinylase route): step 1/3. This Bordetella parapertussis (strain 12822 / ATCC BAA-587 / NCTC 13253) protein is 2,3,4,5-tetrahydropyridine-2,6-dicarboxylate N-succinyltransferase.